Consider the following 59-residue polypeptide: UPF0339 protein CC_2965 (59 aa).

It belongs to the UPF0339 family.

This is UPF0339 protein CC_2965 from Caulobacter vibrioides (strain ATCC 19089 / CIP 103742 / CB 15) (Caulobacter crescentus).